Reading from the N-terminus, the 297-residue chain is Ribosomal RNA small subunit methyltransferase A (297 aa).

Residues Asn-31, Leu-33, Gly-58, Glu-79, Asp-104, and Asn-129 each coordinate S-adenosyl-L-methionine.

The protein belongs to the class I-like SAM-binding methyltransferase superfamily. rRNA adenine N(6)-methyltransferase family. RsmA subfamily.

Its subcellular location is the cytoplasm. The catalysed reaction is adenosine(1518)/adenosine(1519) in 16S rRNA + 4 S-adenosyl-L-methionine = N(6)-dimethyladenosine(1518)/N(6)-dimethyladenosine(1519) in 16S rRNA + 4 S-adenosyl-L-homocysteine + 4 H(+). Specifically dimethylates two adjacent adenosines (A1518 and A1519) in the loop of a conserved hairpin near the 3'-end of 16S rRNA in the 30S particle. May play a critical role in biogenesis of 30S subunits. The chain is Ribosomal RNA small subunit methyltransferase A from Pediococcus pentosaceus (strain ATCC 25745 / CCUG 21536 / LMG 10740 / 183-1w).